The primary structure comprises 232 residues: CD302 antigen (232 aa).

The signal sequence occupies residues 1–22 (MPRAAPPALLLPLLGLAAAAAA). Over 23–168 (DCPSSTWVQF…YEKKYLSDNR (146 aa)) the chain is Extracellular. A C-type lectin domain is found at 32–152 (FQDSCYIFLQ…CEVSSVEGTL (121 aa)). Asn109 carries an N-linked (GlcNAc...) asparagine glycan. Cys128 and Cys143 form a disulfide bridge. Residues 169-189 (ILISALVIASTVILTVLGAVV) form a helical membrane-spanning segment. At 190-232 (WFLYKRSLDSGFTTVFSAAHQSPYNDDCVLVVAEENEYDIQFN) the chain is on the cytoplasmic side.

Its subcellular location is the membrane. It localises to the cell projection. The protein resides in the filopodium. The protein localises to the cytoplasm. It is found in the cell cortex. Its subcellular location is the microvillus. In terms of biological role, potential multifunctional C-type lectin receptor that may play roles in endocytosis and phagocytosis as well as in cell adhesion and migration. The polypeptide is CD302 antigen (Bos taurus (Bovine)).